The sequence spans 154 residues: MKIWIDADACPRVVKEIVSRASERLKVPVCLVANTDLSRAHTSLVTSVRVKAGFDVADDYIAENAEACDLVITADIPLAARVVEKGGVALDPRGELYTEENVGERLSYRNLMAELRTDGMLLGGPAQLGLTDRNRFASALDRLLTKMVREHRPQ.

Belongs to the UPF0178 family.

This Geobacter sp. (strain M21) protein is UPF0178 protein GM21_2006.